Here is a 386-residue protein sequence, read N- to C-terminus: Formate-dependent phosphoribosylglycinamide formyltransferase (386 aa).

N(1)-(5-phospho-beta-D-ribosyl)glycinamide is bound by residues 15 to 16 (EL) and glutamate 75. ATP contacts are provided by residues arginine 107, lysine 148, 153-158 (SSGKGQ), 188-191 (EQFI), and glutamate 196. Residues 112 to 301 (ALAVQQLNLQ…EFELHLRAIV (190 aa)) enclose the ATP-grasp domain. Positions 260 and 272 each coordinate Mg(2+). N(1)-(5-phospho-beta-D-ribosyl)glycinamide is bound by residues aspartate 279, lysine 349, and 356 to 357 (RR).

This sequence belongs to the PurK/PurT family. As to quaternary structure, homodimer.

It catalyses the reaction N(1)-(5-phospho-beta-D-ribosyl)glycinamide + formate + ATP = N(2)-formyl-N(1)-(5-phospho-beta-D-ribosyl)glycinamide + ADP + phosphate + H(+). It participates in purine metabolism; IMP biosynthesis via de novo pathway; N(2)-formyl-N(1)-(5-phospho-D-ribosyl)glycinamide from N(1)-(5-phospho-D-ribosyl)glycinamide (formate route): step 1/1. Functionally, involved in the de novo purine biosynthesis. Catalyzes the transfer of formate to 5-phospho-ribosyl-glycinamide (GAR), producing 5-phospho-ribosyl-N-formylglycinamide (FGAR). Formate is provided by PurU via hydrolysis of 10-formyl-tetrahydrofolate. This Francisella tularensis subsp. holarctica (strain LVS) protein is Formate-dependent phosphoribosylglycinamide formyltransferase.